Here is a 344-residue protein sequence, read N- to C-terminus: N,N-dimethyltransferase OxyT (344 aa).

S-adenosyl-L-methionine contacts are provided by residues Asp205 and 231 to 233 (GDF).

Belongs to the class I-like SAM-binding methyltransferase superfamily. Cation-independent O-methyltransferase family.

The enzyme catalyses 4-amino-4-dedimethylamino-anhydrotetracycline + S-adenosyl-L-methionine = 4-methylamino-4-dedimethylamino-anhydrotetracycline + S-adenosyl-L-homocysteine + H(+). The catalysed reaction is 4-methylamino-4-dedimethylamino-anhydrotetracycline + S-adenosyl-L-methionine = anhydrotetracycline + S-adenosyl-L-homocysteine + H(+). It participates in antibiotic biosynthesis; oxytetracycline biosynthesis. Functionally, involved in the biosynthesis of the tetracycline antibiotic, oxytetracycline. Catalyzes the dimethylation of 4-amino-4-de(dimethylamino)anhydrotetracycline (4-amino-ATC) to yield anhydrotetracycline (ATC). Also able to catalyze the dimethylation of 7-chloro-, 6-demethyl-, 2-decarboxamido-2-nitrile-, and 4-methylamino-derivatives of 4-amino-4-de(dimethylamino)anhydrotetracycline. This is N,N-dimethyltransferase OxyT from Streptomyces rimosus.